A 122-amino-acid chain; its full sequence is Large ribosomal subunit protein bL12 (122 aa).

It belongs to the bacterial ribosomal protein bL12 family. Homodimer. Part of the ribosomal stalk of the 50S ribosomal subunit. Forms a multimeric L10(L12)X complex, where L10 forms an elongated spine to which 2 to 4 L12 dimers bind in a sequential fashion. Binds GTP-bound translation factors.

Functionally, forms part of the ribosomal stalk which helps the ribosome interact with GTP-bound translation factors. Is thus essential for accurate translation. The chain is Large ribosomal subunit protein bL12 from Shewanella loihica (strain ATCC BAA-1088 / PV-4).